A 377-amino-acid polypeptide reads, in one-letter code: tRNA-specific 2-thiouridylase MnmA (377 aa).

ATP-binding positions include 12–19 and methionine 38; that span reads GMSGGVDS. The tract at residues 98–100 is interaction with target base in tRNA; sequence NPD. Residue cysteine 103 is the Nucleophile of the active site. A disulfide bridge connects residues cysteine 103 and cysteine 200. Residue glycine 127 participates in ATP binding. Positions 150–152 are interaction with tRNA; that stretch reads KDQ. Catalysis depends on cysteine 200, which acts as the Cysteine persulfide intermediate. Positions 313–314 are interaction with tRNA; sequence RY.

Belongs to the MnmA/TRMU family.

It localises to the cytoplasm. It catalyses the reaction S-sulfanyl-L-cysteinyl-[protein] + uridine(34) in tRNA + AH2 + ATP = 2-thiouridine(34) in tRNA + L-cysteinyl-[protein] + A + AMP + diphosphate + H(+). Its function is as follows. Catalyzes the 2-thiolation of uridine at the wobble position (U34) of tRNA, leading to the formation of s(2)U34. This Pediococcus pentosaceus (strain ATCC 25745 / CCUG 21536 / LMG 10740 / 183-1w) protein is tRNA-specific 2-thiouridylase MnmA.